The primary structure comprises 126 residues: Ribonuclease P protein component (126 aa).

Belongs to the RnpA family. Consists of a catalytic RNA component (M1 or rnpB) and a protein subunit.

The catalysed reaction is Endonucleolytic cleavage of RNA, removing 5'-extranucleotides from tRNA precursor.. RNaseP catalyzes the removal of the 5'-leader sequence from pre-tRNA to produce the mature 5'-terminus. It can also cleave other RNA substrates such as 4.5S RNA. The protein component plays an auxiliary but essential role in vivo by binding to the 5'-leader sequence and broadening the substrate specificity of the ribozyme. The polypeptide is Ribonuclease P protein component (Synechococcus sp. (strain JA-3-3Ab) (Cyanobacteria bacterium Yellowstone A-Prime)).